A 140-amino-acid polypeptide reads, in one-letter code: Small ribosomal subunit protein uS8c (140 aa).

The protein belongs to the universal ribosomal protein uS8 family. As to quaternary structure, part of the 30S ribosomal subunit.

It is found in the plastid. Its subcellular location is the chloroplast. In terms of biological role, one of the primary rRNA binding proteins, it binds directly to 16S rRNA central domain where it helps coordinate assembly of the platform of the 30S subunit. The protein is Small ribosomal subunit protein uS8c (rps8) of Euglena gracilis.